The following is a 127-amino-acid chain: Fluoride-specific ion channel FluC (127 aa).

Transmembrane regions (helical) follow at residues 4-24 (IIYI…TQIA), 34-54 (FPFP…IGFF), 65-85 (FELR…FSTL), and 97-117 (FYGI…LAVL). 2 residues coordinate Na(+): Gly-77 and Thr-80.

The protein belongs to the fluoride channel Fluc/FEX (TC 1.A.43) family.

It is found in the cell inner membrane. It carries out the reaction fluoride(in) = fluoride(out). Its activity is regulated as follows. Na(+) is not transported, but it plays an essential structural role and its presence is essential for fluoride channel function. In terms of biological role, fluoride-specific ion channel. Important for reducing fluoride concentration in the cell, thus reducing its toxicity. This Bacteroides fragilis (strain ATCC 25285 / DSM 2151 / CCUG 4856 / JCM 11019 / LMG 10263 / NCTC 9343 / Onslow / VPI 2553 / EN-2) protein is Fluoride-specific ion channel FluC.